A 294-amino-acid polypeptide reads, in one-letter code: Beta-glucoside kinase (294 aa).

Residue 5–11 coordinates ATP; it reads AFDIGGT.

This sequence belongs to the ROK (NagC/XylR) family.

The catalysed reaction is D-cellobiose + ATP = 6-phospho-beta-D-glucosyl-(1-&gt;4)-D-glucose + ADP + H(+). In terms of biological role, catalyzes the ATP-dependent phosphorylation of cellobiose to produce cellobiose-6'-P. May have a dual role of kinase and transcriptional regulator of the cellobiose-PTS operon. The protein is Beta-glucoside kinase (bglK) of Listeria monocytogenes serovar 1/2a (strain ATCC BAA-679 / EGD-e).